Here is an 89-residue protein sequence, read N- to C-terminus: Sec-independent protein translocase protein TatA (89 aa).

Residues 1-21 form a helical membrane-spanning segment; it reads MFGLSPAQLIILLVVILLIFG.

Belongs to the TatA/E family. As to quaternary structure, the Tat system comprises two distinct complexes: a TatABC complex, containing multiple copies of TatA, TatB and TatC subunits, and a separate TatA complex, containing only TatA subunits. Substrates initially bind to the TatABC complex, which probably triggers association of the separate TatA complex to form the active translocon.

It localises to the cell inner membrane. In terms of biological role, part of the twin-arginine translocation (Tat) system that transports large folded proteins containing a characteristic twin-arginine motif in their signal peptide across membranes. TatA could form the protein-conducting channel of the Tat system. The chain is Sec-independent protein translocase protein TatA from Haemophilus influenzae (strain ATCC 51907 / DSM 11121 / KW20 / Rd).